The chain runs to 1434 residues: Protein patched homolog 1 (1434 aa).

Low complexity predominate over residues M1–R13. A disordered region spans residues M1 to D34. The Cytoplasmic portion of the chain corresponds to M1 to K86. Residues F87 to L107 traverse the membrane as a helical segment. Residues E108–D422 are Extracellular-facing. N-linked (GlcNAc...) asparagine glycosylation is found at N127, N298, N335, and N400. The helical transmembrane segment at V423 to M443 threads the bilayer. Positions S424–M584 constitute an SSD domain. Over L444–A458 the chain is Cytoplasmic. A helical membrane pass occupies residues G459–I479. Residues S480–Q487 lie on the Extracellular side of the membrane. Residues V488–F508 traverse the membrane as a helical segment. Residues S509–S533 are Cytoplasmic-facing. Residues V534 to P554 traverse the membrane as a helical segment. The Extracellular segment spans residues A555–A563. A helical transmembrane segment spans residues A564–M584. Residues D585–K734 are Cytoplasmic-facing. A helical membrane pass occupies residues A735–T755. At R756–W1013 the chain is on the extracellular side. N861 and N986 each carry an N-linked (GlcNAc...) asparagine glycan. The helical transmembrane segment at L1014 to L1034 threads the bilayer. Topologically, residues N1035–A1039 are cytoplasmic. Residues G1040–I1060 form a helical membrane-spanning segment. The Extracellular segment spans residues G1061–V1069. The helical transmembrane segment at V1070–F1090 threads the bilayer. The Cytoplasmic portion of the chain corresponds to L1091–H1107. Residues M1108–G1128 traverse the membrane as a helical segment. The Extracellular segment spans residues S1129–A1140. A helical transmembrane segment spans residues V1141 to L1161. At S1162–N1434 the chain is on the cytoplasmic side. Disordered regions lie at residues G1175 to G1219, H1257 to P1348, and H1368 to F1396. T1181 carries the post-translational modification Phosphothreonine. S1183 is modified (phosphoserine). Residues S1204 to S1213 show a composition bias toward low complexity. The span at P1288–L1297 shows a compositional bias: basic and acidic residues. The span at P1335–P1348 shows a compositional bias: polar residues. Residue K1413 forms a Glycyl lysine isopeptide (Lys-Gly) (interchain with G-Cter in ubiquitin) linkage.

The protein belongs to the patched family. Interacts with SNX17. Interacts with IHH. Interacts with G-protein coupled receptor GPR37L1. Post-translationally, glycosylation is necessary for SHH binding. In terms of processing, in the absence of Hh ligands, ubiquitination by ITCH at Lys-1413 promotes endocytosis and both proteasomal and lysosomal degradation. Detected in cerebellar Bergmann glia cells (at protein level). In the developing embryo, first detected within the ventral neural tube and later in the somites and limb buds. Expression in the limb buds is restricted to the posterior ectoderm surrounding the zone of polarizing activity. In the adult, expression is seen in brain, lung, liver, kidney and ocular tissues; lower levels in heart, skeletal muscle, and testis.

It localises to the cell membrane. Functionally, acts as a receptor for sonic hedgehog (SHH), indian hedgehog (IHH) and desert hedgehog (DHH). Associates with the smoothened protein (SMO) to transduce the hedgehog's proteins signal. Seems to have a tumor suppressor function, as inactivation of this protein is probably a necessary, if not sufficient step for tumorigenesis. The chain is Protein patched homolog 1 (Ptch1) from Mus musculus (Mouse).